Reading from the N-terminus, the 374-residue chain is Coiled-coil domain-containing protein 89 (374 aa).

A disordered region spans residues 1-38; the sequence is MRAPMPQKEQAPRMDTSPPEERLEKQNEKLNNQEEEME. T16 is modified (phosphothreonine). The span at 19–32 shows a compositional bias: basic and acidic residues; that stretch reads PEERLEKQNEKLNN. Positions 19–350 form a coiled coil; the sequence is PEERLEKQNE…YDELRLQSEA (332 aa).

It belongs to the CCDC89 family. Interacts with HEY1.

It is found in the cytoplasm. The protein localises to the nucleus. This is Coiled-coil domain-containing protein 89 (CCDC89) from Macaca fascicularis (Crab-eating macaque).